The sequence spans 121 residues: MPKRDIKAFLYDILEYMDDIINFTKNMEYEEFINNKAIKYAVVRCLEVIGEAVKKIPKDIREKYPHIPFKELAGMRDKLIHQYFGVDYLTVWETAKYEIPEIKKEFEKIIKDIEGKDENSL.

Catalysis depends on residues Arg-76 and His-81. Positions 76–83 (RDKLIHQY) match the RX(4)HXY motif motif. At Tyr-83 the chain carries O-di-AMP-tyrosine.

The protein belongs to the HepT RNase toxin family. As to quaternary structure, homodimer, probably forms a complex with antitoxin MJ1215 or MJ1217. Modified by antitoxin MJ1215 or MJ1217; probably at least 2 successive AMPylation events occur on Tyr-83.

Its function is as follows. Probable toxic component of a putative type VII toxin-antitoxin (TA) system, probably an RNase. Probably neutralized by antitoxin MJ1215 or MJ1217. Neutralization may be due to AMPylation by antitoxin. The chain is Putative RNase MJ1216 from Methanocaldococcus jannaschii (strain ATCC 43067 / DSM 2661 / JAL-1 / JCM 10045 / NBRC 100440) (Methanococcus jannaschii).